The following is a 396-amino-acid chain: L-lactate dehydrogenase (396 aa).

The region spanning 1-380 (MIISAASDYR…SRDSLVQELG (380 aa)) is the FMN hydroxy acid dehydrogenase domain. Residue tyrosine 24 participates in substrate binding. Positions 106 and 127 each coordinate FMN. Residue tyrosine 129 participates in substrate binding. An FMN-binding site is contributed by threonine 155. Residue arginine 164 participates in substrate binding. Lysine 251 provides a ligand contact to FMN. The active-site Proton acceptor is the histidine 275. A substrate-binding site is contributed by arginine 278. 306 to 330 (DSGIRNGLDVVRMIALGADSVLLGR) contacts FMN.

This sequence belongs to the FMN-dependent alpha-hydroxy acid dehydrogenase family. Requires FMN as cofactor.

It is found in the cell inner membrane. The enzyme catalyses (S)-lactate + A = pyruvate + AH2. Functionally, catalyzes the conversion of L-lactate to pyruvate. Is coupled to the respiratory chain. In Citrobacter koseri (strain ATCC BAA-895 / CDC 4225-83 / SGSC4696), this protein is L-lactate dehydrogenase.